The following is a 111-amino-acid chain: Cell cycle protein GpsB (111 aa).

Positions 38-72 (IKDYEAFHKEFEQLKQQNARLKRELEEQKLAVTQV) form a coiled coil.

It belongs to the GpsB family. As to quaternary structure, forms polymers through the coiled coil domains. Interacts with PBP1, MreC and EzrA.

It is found in the cytoplasm. Divisome component that associates with the complex late in its assembly, after the Z-ring is formed, and is dependent on DivIC and PBP2B for its recruitment to the divisome. Together with EzrA, is a key component of the system that regulates PBP1 localization during cell cycle progression. Its main role could be the removal of PBP1 from the cell pole after pole maturation is completed. Also contributes to the recruitment of PBP1 to the division complex. Not essential for septum formation. The chain is Cell cycle protein GpsB from Bacillus cereus (strain G9842).